Here is a 76-residue protein sequence, read N- to C-terminus: UPF0248 protein PAE2518 (76 aa).

It belongs to the UPF0248 family.

This is UPF0248 protein PAE2518 from Pyrobaculum aerophilum (strain ATCC 51768 / DSM 7523 / JCM 9630 / CIP 104966 / NBRC 100827 / IM2).